The sequence spans 204 residues: Somatotropin (204 aa).

The N-terminal stretch at 1 to 17 (MDRVLLLLSVLSLGVSS) is a signal peptide. Q18 is subject to Pyrrolidone carboxylic acid. H36 contacts Zn(2+). Residues C69 and C177 are joined by a disulfide bond. Position 186 (E186) interacts with Zn(2+). A disulfide bond links C194 and C202.

This sequence belongs to the somatotropin/prolactin family.

It is found in the secreted. Its function is as follows. Growth hormone plays an important role in growth control and is involved in the regulation of several anabolic processes. Implicated as an osmoregulatory substance important for seawater adaptation. The sequence is that of Somatotropin (gh) from Sciaenops ocellatus (Red drum).